A 130-amino-acid polypeptide reads, in one-letter code: Small ribosomal subunit protein uS9 (130 aa).

Belongs to the universal ribosomal protein uS9 family.

The protein is Small ribosomal subunit protein uS9 of Cupriavidus taiwanensis (strain DSM 17343 / BCRC 17206 / CCUG 44338 / CIP 107171 / LMG 19424 / R1) (Ralstonia taiwanensis (strain LMG 19424)).